Consider the following 632-residue polypeptide: uncharacterized protein (632 aa).

A run of 4 helical transmembrane segments spans residues 255–275 (LFYA…ELRV), 506–526 (IALL…LTSI), 566–586 (MIFA…SMVF), and 603–623 (IVVI…AVLF).

The protein localises to the cell membrane. This is an uncharacterized protein from Mycoplasma pneumoniae (strain ATCC 29342 / M129 / Subtype 1) (Mycoplasmoides pneumoniae).